The following is a 476-amino-acid chain: Aspartyl/glutamyl-tRNA(Asn/Gln) amidotransferase subunit B (476 aa).

It belongs to the GatB/GatE family. GatB subfamily. As to quaternary structure, heterotrimer of A, B and C subunits.

The enzyme catalyses L-glutamyl-tRNA(Gln) + L-glutamine + ATP + H2O = L-glutaminyl-tRNA(Gln) + L-glutamate + ADP + phosphate + H(+). It catalyses the reaction L-aspartyl-tRNA(Asn) + L-glutamine + ATP + H2O = L-asparaginyl-tRNA(Asn) + L-glutamate + ADP + phosphate + 2 H(+). Allows the formation of correctly charged Asn-tRNA(Asn) or Gln-tRNA(Gln) through the transamidation of misacylated Asp-tRNA(Asn) or Glu-tRNA(Gln) in organisms which lack either or both of asparaginyl-tRNA or glutaminyl-tRNA synthetases. The reaction takes place in the presence of glutamine and ATP through an activated phospho-Asp-tRNA(Asn) or phospho-Glu-tRNA(Gln). In Variovorax paradoxus (strain S110), this protein is Aspartyl/glutamyl-tRNA(Asn/Gln) amidotransferase subunit B.